A 358-amino-acid polypeptide reads, in one-letter code: WD repeat-containing protein 53 (358 aa).

WD repeat units follow at residues 1-38, 43-80, 85-123, 127-166, 173-225, and 232-270; these read MAVKWTGGHSSPVLCLNASKEGLLASGAEGGDLTAWGE, LGHTRFQGADDVTSVLFSPSCPTKLYASHGETISVLDV, DSLDHFHVNEEEINCLSLNQTENLLASADDSGAIKILDL, KVIRSLKRHSNICSSVAFRPQRPQSLVSCGLDMQVMLWSL, WITN…RIFR, and EQELGFKGHTSGVSQVCFLPESYLLLTGGNDGKITLWDA. The interval 273–311 is disordered; sequence EVEKKQKSPTKRTHRKKPKRGTCTKQGGNTNASVTDEEE. The span at 279–294 shows a compositional bias: basic residues; the sequence is KSPTKRTHRKKPKRGT. The span at 295–306 shows a compositional bias: polar residues; it reads CTKQGGNTNASV. The stretch at 314-355 is one WD 7 repeat; that stretch reads NILPKLNIEHGEKVNWLLGTKIKGHQNILVADQTSCISVYPL.

It belongs to the WD repeat WDR53 family.

This chain is WD repeat-containing protein 53 (WDR53), found in Homo sapiens (Human).